Reading from the N-terminus, the 355-residue chain is Protein RecA (355 aa).

74–81 (GPESSGKT) provides a ligand contact to ATP.

It belongs to the RecA family.

It localises to the cytoplasm. In terms of biological role, can catalyze the hydrolysis of ATP in the presence of single-stranded DNA, the ATP-dependent uptake of single-stranded DNA by duplex DNA, and the ATP-dependent hybridization of homologous single-stranded DNAs. It interacts with LexA causing its activation and leading to its autocatalytic cleavage. This is Protein RecA from Cytophaga hutchinsonii (strain ATCC 33406 / DSM 1761 / CIP 103989 / NBRC 15051 / NCIMB 9469 / D465).